The following is a 658-amino-acid chain: Probable CoA ligase CCL6 (658 aa).

ATP-binding positions include 226–234, 411–416, Asp-497, 509–512, and Lys-632; these read TSGATGEPK, QGYGLT, and IIDR. The segment at 298–411 is SBD1; sequence DIRFLMDDLQ…RVTSCAALSQ (114 aa). The tract at residues 412–477 is SBD2; sequence GYGLTESCGG…LRGTTLFSGY (66 aa).

Belongs to the ATP-dependent AMP-binding enzyme family. As to expression, mostly expressed in glandular trichomes (lupulin glands) after flowering, and, to a lower extent, in stems, leaves, cones and flowers.

It is found in the cytoplasm. The protein localises to the cytosol. This Humulus lupulus (European hop) protein is Probable CoA ligase CCL6.